The primary structure comprises 170 residues: FMRFamide-like neuropeptides 6 (170 aa).

An N-terminal signal peptide occupies residues 1-19; the sequence is MNSRGLILTLGVVIAVAFA. At Gln20 the chain carries Pyrrolidone carboxylic acid. Phe39 is modified (phenylalanine amide). Residues 42-51 constitute a propeptide that is removed on maturation; it reads SDGGNPMEME. Position 60 is a phenylalanine amide (Phe60). Residues 63-81 constitute a propeptide that is removed on maturation; the sequence is RSSGGDEQELVGGDDIDME. The residue at position 90 (Phe90) is a Phenylalanine amide. Positions 93 to 104 are excised as a propeptide; the sequence is RSGPQEDDMPME. Phe113 carries the phenylalanine amide modification. The propeptide occupies 116-136; that stretch reads RSSDMEVIGNEGVDGDAHDLF. Position 145 is a phenylalanine amide (Phe145). Positions 148-159 are excised as a propeptide; that stretch reads RSMGEEEDHDMM. Residues 150–170 are disordered; the sequence is MGEEEDHDMMKRKSAYMRFGR. The segment covering 159-170 has biased composition (basic residues); that stretch reads MKRKSAYMRFGR. At Phe168 the chain carries Phenylalanine amide.

The protein belongs to the FARP (FMRFamide related peptide) family. In terms of tissue distribution, each flp gene is expressed in a distinct set of neurons. Flp-6 is expressed in the ASE sensory neurons, AFD, ASG, PVT and I1 neurons.

The protein localises to the secreted. In terms of biological role, FMRFamides and FMRFamide-like peptides are neuropeptides. KSAYMRF-amide has an excitatory effect on dissected pharyngeal myogenic muscle system. The sequence is that of FMRFamide-like neuropeptides 6 from Caenorhabditis elegans.